A 243-amino-acid polypeptide reads, in one-letter code: Tyrosine recombinase XerD-like (243 aa).

The region spanning 1–72 is the Core-binding (CB) domain; that stretch reads MKQAIESFIQ…AVNQFLYFLY (72 aa). The region spanning 91–243 is the Tyr recombinase domain; sequence SVKKKLERED…KTSMSLEKFR (153 aa). Residues lysine 149 and arginine 210 contribute to the active site.

This sequence belongs to the 'phage' integrase family. XerD-like subfamily.

The protein localises to the cytoplasm. Functionally, putative tyrosine recombinase. Not involved in the cutting and rejoining of the recombining DNA molecules on dif(SL) site. This chain is Tyrosine recombinase XerD-like, found in Streptococcus suis (strain 98HAH33).